The sequence spans 327 residues: Malate dehydrogenase (327 aa).

11–17 (GAAGQIG) contributes to the NAD(+) binding site. Residues R92 and R98 each contribute to the substrate site. Residues N105, Q112, and 129-131 (VGN) each bind NAD(+). 2 residues coordinate substrate: N131 and R162. H187 serves as the catalytic Proton acceptor.

The protein belongs to the LDH/MDH superfamily. MDH type 2 family.

The enzyme catalyses (S)-malate + NAD(+) = oxaloacetate + NADH + H(+). Its function is as follows. Catalyzes the reversible oxidation of malate to oxaloacetate. This Leptospira biflexa serovar Patoc (strain Patoc 1 / Ames) protein is Malate dehydrogenase.